Consider the following 213-residue polypeptide: ATP-dependent Clp protease proteolytic subunit 1 (213 aa).

The Nucleophile role is filled by Ser-108. His-133 is a catalytic residue.

This sequence belongs to the peptidase S14 family. Fourteen ClpP subunits assemble into 2 heptameric rings which stack back to back to give a disk-like structure with a central cavity, resembling the structure of eukaryotic proteasomes.

The protein localises to the cytoplasm. It catalyses the reaction Hydrolysis of proteins to small peptides in the presence of ATP and magnesium. alpha-casein is the usual test substrate. In the absence of ATP, only oligopeptides shorter than five residues are hydrolyzed (such as succinyl-Leu-Tyr-|-NHMec, and Leu-Tyr-Leu-|-Tyr-Trp, in which cleavage of the -Tyr-|-Leu- and -Tyr-|-Trp bonds also occurs).. Cleaves peptides in various proteins in a process that requires ATP hydrolysis. Has a chymotrypsin-like activity. Plays a major role in the degradation of misfolded proteins. The protein is ATP-dependent Clp protease proteolytic subunit 1 of Frankia casuarinae (strain DSM 45818 / CECT 9043 / HFP020203 / CcI3).